The chain runs to 828 residues: DNA gyrase subunit A (828 aa).

A Topo IIA-type catalytic domain is found at 32–497 (LPDVRDGLKP…EVLSLEDEDL (466 aa)). The active-site O-(5'-phospho-DNA)-tyrosine intermediate is Tyr-120. Residues 524-530 (QKRGGRG) carry the GyrA-box motif.

This sequence belongs to the type II topoisomerase GyrA/ParC subunit family. In terms of assembly, heterotetramer, composed of two GyrA and two GyrB chains. In the heterotetramer, GyrA contains the active site tyrosine that forms a transient covalent intermediate with DNA, while GyrB binds cofactors and catalyzes ATP hydrolysis.

It localises to the cytoplasm. The enzyme catalyses ATP-dependent breakage, passage and rejoining of double-stranded DNA.. Functionally, a type II topoisomerase that negatively supercoils closed circular double-stranded (ds) DNA in an ATP-dependent manner to modulate DNA topology and maintain chromosomes in an underwound state. Negative supercoiling favors strand separation, and DNA replication, transcription, recombination and repair, all of which involve strand separation. Also able to catalyze the interconversion of other topological isomers of dsDNA rings, including catenanes and knotted rings. Type II topoisomerases break and join 2 DNA strands simultaneously in an ATP-dependent manner. The chain is DNA gyrase subunit A from Streptococcus pyogenes serotype M18 (strain MGAS8232).